Here is a 254-residue protein sequence, read N- to C-terminus: Hydroxyacylglutathione hydrolase (254 aa).

Zn(2+) contacts are provided by His-54, His-56, Asp-58, His-59, His-111, Asp-130, and His-168.

It belongs to the metallo-beta-lactamase superfamily. Glyoxalase II family. In terms of assembly, monomer. Requires Zn(2+) as cofactor.

It carries out the reaction an S-(2-hydroxyacyl)glutathione + H2O = a 2-hydroxy carboxylate + glutathione + H(+). The protein operates within secondary metabolite metabolism; methylglyoxal degradation; (R)-lactate from methylglyoxal: step 2/2. Thiolesterase that catalyzes the hydrolysis of S-D-lactoyl-glutathione to form glutathione and D-lactic acid. This chain is Hydroxyacylglutathione hydrolase, found in Legionella pneumophila (strain Paris).